Reading from the N-terminus, the 171-residue chain is Ribosome maturation factor RimP (171 aa).

This sequence belongs to the RimP family.

The protein localises to the cytoplasm. Its function is as follows. Required for maturation of 30S ribosomal subunits. In Oleidesulfovibrio alaskensis (strain ATCC BAA-1058 / DSM 17464 / G20) (Desulfovibrio alaskensis), this protein is Ribosome maturation factor RimP.